The chain runs to 178 residues: ATP synthase subunit delta (178 aa).

This sequence belongs to the ATPase delta chain family. As to quaternary structure, F-type ATPases have 2 components, F(1) - the catalytic core - and F(0) - the membrane proton channel. F(1) has five subunits: alpha(3), beta(3), gamma(1), delta(1), epsilon(1). F(0) has three main subunits: a(1), b(2) and c(10-14). The alpha and beta chains form an alternating ring which encloses part of the gamma chain. F(1) is attached to F(0) by a central stalk formed by the gamma and epsilon chains, while a peripheral stalk is formed by the delta and b chains.

It localises to the cell inner membrane. F(1)F(0) ATP synthase produces ATP from ADP in the presence of a proton or sodium gradient. F-type ATPases consist of two structural domains, F(1) containing the extramembraneous catalytic core and F(0) containing the membrane proton channel, linked together by a central stalk and a peripheral stalk. During catalysis, ATP synthesis in the catalytic domain of F(1) is coupled via a rotary mechanism of the central stalk subunits to proton translocation. In terms of biological role, this protein is part of the stalk that links CF(0) to CF(1). It either transmits conformational changes from CF(0) to CF(1) or is implicated in proton conduction. This chain is ATP synthase subunit delta, found in Pseudomonas fluorescens (strain Pf0-1).